The sequence spans 110 residues: Small ribosomal subunit protein bS16 (110 aa).

The segment covering 81 to 104 (VRPAEVLGKQKQEKERSAKKKDAT) has biased composition (basic and acidic residues). The interval 81-110 (VRPAEVLGKQKQEKERSAKKKDATASETSE) is disordered.

This sequence belongs to the bacterial ribosomal protein bS16 family.

The sequence is that of Small ribosomal subunit protein bS16 from Prochlorococcus marinus (strain NATL1A).